Here is a 156-residue protein sequence, read N- to C-terminus: Transcriptional repressor NrdR (156 aa).

A zinc finger lies at C3 to C34. Residues P49–E139 form the ATP-cone domain.

This sequence belongs to the NrdR family. Zn(2+) is required as a cofactor.

In terms of biological role, negatively regulates transcription of bacterial ribonucleotide reductase nrd genes and operons by binding to NrdR-boxes. This is Transcriptional repressor NrdR from Desulfotalea psychrophila (strain LSv54 / DSM 12343).